Here is a 468-residue protein sequence, read N- to C-terminus: UDP-N-acetylmuramate--L-alanine ligase (468 aa).

Position 114–120 (glycine 114–threonine 120) interacts with ATP.

This sequence belongs to the MurCDEF family.

Its subcellular location is the cytoplasm. It carries out the reaction UDP-N-acetyl-alpha-D-muramate + L-alanine + ATP = UDP-N-acetyl-alpha-D-muramoyl-L-alanine + ADP + phosphate + H(+). The protein operates within cell wall biogenesis; peptidoglycan biosynthesis. Cell wall formation. The sequence is that of UDP-N-acetylmuramate--L-alanine ligase from Methylocella silvestris (strain DSM 15510 / CIP 108128 / LMG 27833 / NCIMB 13906 / BL2).